The following is a 274-amino-acid chain: MTHVEIRHAMDPVSARQLDTAGLREAFHMGDLFRSGEIRLVYTHYDRMIVGGAVPAGEPLVLDEVKPTGTASILDRREMGVVNVGAAGTVSAGGESWEMGRGDVLYLPMGAGPVTFAGEGRFYILSAPAHTAHPARLVKLEDAKKVKLGSPETANERTINQFIHPEVMQSCQLVVGYTQFHGGSVWNTMPAHVHDRRMEAYLYFDLAEEARVFHFMGEPSETRHLVMRNEEAVVSPPWSIHCGCGTGSYTFVWAMAGDNVDYRDVEMVAMEDLR.

Residues histidine 192, histidine 194, glutamate 199, and histidine 241 each coordinate Zn(2+).

Belongs to the KduI family. Zn(2+) is required as a cofactor.

It catalyses the reaction 5-dehydro-4-deoxy-D-glucuronate = 3-deoxy-D-glycero-2,5-hexodiulosonate. It functions in the pathway glycan metabolism; pectin degradation; 2-dehydro-3-deoxy-D-gluconate from pectin: step 4/5. Its function is as follows. Catalyzes the isomerization of 5-dehydro-4-deoxy-D-glucuronate to 3-deoxy-D-glycero-2,5-hexodiulosonate. This is 4-deoxy-L-threo-5-hexosulose-uronate ketol-isomerase from Cereibacter sphaeroides (strain ATCC 17029 / ATH 2.4.9) (Rhodobacter sphaeroides).